A 283-amino-acid chain; its full sequence is Mau operon transcriptional activator (283 aa).

In terms of domain architecture, HTH lysR-type spans 1 to 58; the sequence is MNWDDLRVVAAINRCGSFNRAAKMLNVEETTIARRLARLEGSLGCVLFQAVDGQRRPT. The segment at residues 18–37 is a DNA-binding region (H-T-H motif); it reads FNRAAKMLNVEETTIARRLA.

Belongs to the LysR transcriptional regulatory family.

In terms of biological role, transcriptional activator of the mau genes involved in methylamine metabolism. This chain is Mau operon transcriptional activator (mauR), found in Paracoccus denitrificans.